Here is a 430-residue protein sequence, read N- to C-terminus: MGQPEGLERFDSPGKGRGLKATRSFALGELLFTCPAYTYVLTDTERGNHCDFCFARKEGLSKCGKCKQAFYCNVDCQKGDWPMHKLECSAMCSYGQNWCPSETVRLTARILAKQKTQTERTPSETFLSVKEFESHLSKLDNEKKELIESDIAALHRFYSKNLHYTDNAALVFLFAQVNCNGFTIEDEELSHLGSAIFPDVALMNHSCCPNIIVTFKGTVAEIRAVQEIHAGDEVFTSYIDLLYPTEDRNDRLMDSYFFTCDCRECSTKQKDPAKLEIRKLSDPPSHQTVKDMIKYARNIVEEFRRAKHYKTPSELLEMCELSLDKMGSVFVDSNVYMLHMMYQAMGVCLYLQEWDGALKYGEKIIKPYSKHYPAYSLNVASMWLKLGRLYMGLEKTTIGTKALKKALAIMQIAHGPDHHYIAEIKKELEL.

The SET domain maps to 5-239 (EGLERFDSPG…AGDEVFTSYI (235 aa)). Position 15-17 (15-17 (KGR)) interacts with S-adenosyl-L-methionine. Residues C50, C53, C63, C66, C72, C76, H84, and C88 each contribute to the Zn(2+) site. The segment at 50 to 88 (CDFCFARKEGLSKCGKCKQAFYCNVDCQKGDWPMHKLEC) adopts an MYND-type zinc-finger fold. S-adenosyl-L-methionine-binding positions include H135, 204–205 (NH), and 256–258 (YFF).

It belongs to the class V-like SAM-binding methyltransferase superfamily.

The protein localises to the cytoplasm. Its subcellular location is the cytosol. The protein resides in the nucleus. The catalysed reaction is L-lysyl(4)-[histone H3] + 3 S-adenosyl-L-methionine = N(6),N(6),N(6)-trimethyl-L-lysyl(4)-[histone H3] + 3 S-adenosyl-L-homocysteine + 3 H(+). The enzyme catalyses L-lysyl-[protein] + S-adenosyl-L-methionine = N(6)-methyl-L-lysyl-[protein] + S-adenosyl-L-homocysteine + H(+). Functionally, protein-lysine N-methyltransferase that methylates both histones and non-histone proteins, including p53/TP53 and RB1. Specifically trimethylates histone H3 'Lys-4' (H3K4me3) in vivo. The activity requires interaction with HSP90alpha. Shows even higher methyltransferase activity on p53/TP53. Monomethylates 'Lys-370' of p53/TP53, leading to decreased DNA-binding activity and subsequent transcriptional regulation activity of p53/TP53. Monomethylates RB1 at 'Lys-860'. In Xenopus laevis (African clawed frog), this protein is N-lysine methyltransferase SMYD2-A (smyd2-a).